The following is a 470-amino-acid chain: ATP synthase subunit beta (470 aa).

Position 157–164 (157–164 (GGAGVGKT)) interacts with ATP.

It belongs to the ATPase alpha/beta chains family. In terms of assembly, F-type ATPases have 2 components, CF(1) - the catalytic core - and CF(0) - the membrane proton channel. CF(1) has five subunits: alpha(3), beta(3), gamma(1), delta(1), epsilon(1). CF(0) has three main subunits: a(1), b(2) and c(9-12). The alpha and beta chains form an alternating ring which encloses part of the gamma chain. CF(1) is attached to CF(0) by a central stalk formed by the gamma and epsilon chains, while a peripheral stalk is formed by the delta and b chains.

It localises to the cell inner membrane. It carries out the reaction ATP + H2O + 4 H(+)(in) = ADP + phosphate + 5 H(+)(out). Its function is as follows. Produces ATP from ADP in the presence of a proton gradient across the membrane. The catalytic sites are hosted primarily by the beta subunits. This is ATP synthase subunit beta from Geotalea daltonii (strain DSM 22248 / JCM 15807 / FRC-32) (Geobacter daltonii).